A 67-amino-acid chain; its full sequence is Alpha-actitoxin-Ms11a-3 (67 aa).

The first 24 residues, 1 to 24, serve as a signal peptide directing secretion; it reads MASKIFFVLAVFLVMSAVLPESFA. 3 disulfide bridges follow: C26–C41, C33–C46, and C40–C61. Residue K66 is modified to Lysine amide.

It localises to the secreted. The protein localises to the nematocyst. In terms of biological role, alpha-toxins act on postsynaptic membranes, they bind to the nicotinic acetylcholine receptors (nAChR) and thus inhibit them. This toxin shows inhibition against mouse alpha-1-beta-1-delta-epsilon (CHRNA1-CHRNB1-CHRND-CHRNE) (IC(50)=1215 nM), rat alpha-3-beta-4/CHRNA3-CHRNB4 (IC(50)=5.173 uM), rat alpha-7/CHRNA7 (IC(50)=4.786 uM), human alpha-7/CHRNA7 (IC(50)=8.869 uM), and rat alpha-9-alpha-10/CHRNA9-CHRNA10 (IC(50)=202 nM). Also competes with alpha-bungarotoxin for binding to orthosteric sites on muscle-type T.carlifornicus (IC(50)=256 nM) and human alpha-7/CHRNA7 nAChRs (IC(50)=19.81 uM). This is Alpha-actitoxin-Ms11a-3 from Metridium senile (Brown sea anemone).